A 256-amino-acid chain; its full sequence is Isoprenyl transferase (256 aa).

The active site involves Asp33. Position 33 (Asp33) interacts with Mg(2+). Residues 34–37 (GNGR), Trp38, Arg46, His50, and 78–80 (STE) each bind substrate. The Proton acceptor role is filled by Asn81. Residues Trp82, Arg84, Arg201, and 207-209 (RIS) each bind substrate. Glu220 provides a ligand contact to Mg(2+).

This sequence belongs to the UPP synthase family. As to quaternary structure, homodimer. It depends on Mg(2+) as a cofactor.

Catalyzes the condensation of isopentenyl diphosphate (IPP) with allylic pyrophosphates generating different type of terpenoids. In Staphylococcus haemolyticus (strain JCSC1435), this protein is Isoprenyl transferase.